A 329-amino-acid polypeptide reads, in one-letter code: Cysteine synthase (329 aa).

N6-(pyridoxal phosphate)lysine is present on lysine 48. Pyridoxal 5'-phosphate is bound by residues asparagine 78, glycine 183 to threonine 187, and serine 278.

This sequence belongs to the cysteine synthase/cystathionine beta-synthase family. In terms of assembly, homodimer. Requires pyridoxal 5'-phosphate as cofactor.

The enzyme catalyses O-acetyl-L-serine + hydrogen sulfide = L-cysteine + acetate. Its pathway is amino-acid biosynthesis; L-cysteine biosynthesis; L-cysteine from L-serine: step 2/2. In terms of biological role, catalyzes the conversion of O-acetylserine (OAS) to cysteine through the elimination of acetate and addition of hydrogen sulfide. The polypeptide is Cysteine synthase (srpG) (Synechococcus elongatus (strain ATCC 33912 / PCC 7942 / FACHB-805) (Anacystis nidulans R2)).